The primary structure comprises 166 residues: MNKTIYIAAGCFWGGEKYFSLIHGVLSTKVGYANGTTSNPTYEEVCHNNTGHAETVEIQYDDSILPLEKLLRLYYEVIDPTSVNKQGGDQGIQYRTGIYYIDEADLEIIKPSLEELAKKYDKPIAIEVKQLLHFYDAEEYHQKYLDKNPSGYCHIGQCAFDSAKNA.

Cys-11 is a catalytic residue.

The protein belongs to the MsrA Met sulfoxide reductase family.

The catalysed reaction is L-methionyl-[protein] + [thioredoxin]-disulfide + H2O = L-methionyl-(S)-S-oxide-[protein] + [thioredoxin]-dithiol. It carries out the reaction [thioredoxin]-disulfide + L-methionine + H2O = L-methionine (S)-S-oxide + [thioredoxin]-dithiol. Its function is as follows. Has an important function as a repair enzyme for proteins that have been inactivated by oxidation. Catalyzes the reversible oxidation-reduction of methionine sulfoxide in proteins to methionine. In Lachnoclostridium phytofermentans (strain ATCC 700394 / DSM 18823 / ISDg) (Clostridium phytofermentans), this protein is Peptide methionine sulfoxide reductase MsrA.